The chain runs to 497 residues: 3-octaprenyl-4-hydroxybenzoate carboxy-lyase (497 aa).

Asn175 contacts Mn(2+). Residues 178 to 180, 192 to 194, and 197 to 198 contribute to the prenylated FMN site; these read IYR, RWL, and RG. Glu241 contacts Mn(2+). Catalysis depends on Asp290, which acts as the Proton donor.

This sequence belongs to the UbiD family. As to quaternary structure, homohexamer. Requires prenylated FMN as cofactor. It depends on Mn(2+) as a cofactor.

The protein resides in the cell membrane. It catalyses the reaction a 4-hydroxy-3-(all-trans-polyprenyl)benzoate + H(+) = a 2-(all-trans-polyprenyl)phenol + CO2. It participates in cofactor biosynthesis; ubiquinone biosynthesis. Catalyzes the decarboxylation of 3-octaprenyl-4-hydroxy benzoate to 2-octaprenylphenol, an intermediate step in ubiquinone biosynthesis. The polypeptide is 3-octaprenyl-4-hydroxybenzoate carboxy-lyase (Shigella flexneri).